The primary structure comprises 95 residues: Large ribosomal subunit protein bL27 (95 aa).

Positions 1–10 (MRFILNLQFF) are excised as a propeptide.

The protein belongs to the bacterial ribosomal protein bL27 family. The N-terminus is cleaved by ribosomal processing cysteine protease Prp.

This chain is Large ribosomal subunit protein bL27, found in Mesoplasma florum (strain ATCC 33453 / NBRC 100688 / NCTC 11704 / L1) (Acholeplasma florum).